Reading from the N-terminus, the 156-residue chain is Endogenous retrovirus group K member 19 Pro protein (156 aa).

The Peptidase A2 domain maps to 21–96; it reads FEGLVDTGAD…IPLNLWGRDL (76 aa). Asp-26 is a catalytic residue. The region spanning 111–156 is the G-patch domain; the sequence is YSPTSQKIMTKMGYILGKGLGKNEDGIKIPVEAKINQKREGIGYPF.

Belongs to the peptidase A2 family. HERV class-II K(HML-2) subfamily. In terms of assembly, active as a homodimer. In terms of processing, autoproteolytically processed at the N-terminus. Expected C-terminal autoprocessing not detected. The sequence shown is that of the processed Pro protein.

It catalyses the reaction Processing at the authentic HIV-1 PR recognition site and release of the mature p17 matrix and the p24 capsid protein, as a result of the cleavage of the -SQNY-|-PIVQ- cleavage site.. Retroviral proteases have roles in the processing of the primary translation products and the maturation of the viral particle. Endogenous Pro proteins may have kept, lost or modified their original function during evolution. This chain is Endogenous retrovirus group K member 19 Pro protein (ERVK-19), found in Homo sapiens (Human).